The following is a 483-amino-acid chain: MEEGGGGVRSLVPGGPVLLVLCGLLEASGGGRALPQLSDDIPFRVNWPGTEFSLPTTGVLYKEDNYVIMTTAHKEKYKCILPLVTSGDEEEEKDYKGPNPRELLEPLFKQSSCSYRIESYWTYEVCHGKHIRQYHEEKETGQKINIHEYYLGNMLAKNLLFEKEREAEEKEKSNEIPTKNIEGQMTPYYPVGMGNGTPCSLKQNRPRSSTVMYICHPESKHEILSVAEVTTCEYEVVILTPLLCSHPKYRFRASPVNDIFCQSLPGSPFKPLTLRQLEQQEEILRVPFRRNKEEDLQSTKEERFPAIHKSIAIGSQPVLTVGTTHISKLTDDQLIKEFLSGSYCFRGGVGWWKYEFCYGKHVHQYHEDKDSGKTSVVVGTWNQEEHIEWAKKNTARAYHLQDDGTQTVRMVSHFYGNGDICDITDKPRQVTVKLKCKESDSPHAVTVYMLEPHSCQYILGVESPVICKILDTADENGLLSLPN.

An N-terminal signal peptide occupies residues 1 to 33 (MEEGGGGVRSLVPGGPVLLVLCGLLEASGGGRA). MRH domains lie at 111 to 246 (SSCS…LCSH) and 342 to 469 (SYCF…ICKI). Residues C113 and C126 are joined by a disulfide bond. A glycan (N-linked (GlcNAc...) asparagine) is linked at N195. 5 disulfides stabilise this stretch: C199–C232, C215–C244, C344–C357, C421–C455, and C436–C467.

In terms of assembly, may form a complex with OS9, HSPA5, SYVN1, and SEL1L with which it interacts directly. Interacts (via PRKCSH 2 domain) with KREMEN2 (when glycosylated). Interacts with HSPA5. In terms of processing, isoform 1 and isoform 2 are N-glycosylated.

It is found in the endoplasmic reticulum lumen. In terms of biological role, probable lectin that binds selectively to improperly folded lumenal proteins. May function in endoplasmic reticulum quality control and endoplasmic reticulum-associated degradation (ERAD) of both non-glycosylated proteins and glycoproteins. This Homo sapiens (Human) protein is Endoplasmic reticulum lectin 1 (ERLEC1).